We begin with the raw amino-acid sequence, 916 residues long: DNA gyrase subunit A (916 aa).

The Topo IIA-type catalytic domain occupies 42–544; that stretch reads LPDVRDGLKP…FGGDIADEDL (503 aa). Tyrosine 130 acts as the O-(5'-phospho-DNA)-tyrosine intermediate in catalysis. The GyrA-box motif lies at 571–577; sequence QRRGGRG. The span at 739–748 shows a compositional bias: acidic residues; the sequence is SDDLEDETAD. Disordered stretches follow at residues 739–774 and 897–916; these read SDDL…RGMR and ESEL…EAEN.

It belongs to the type II topoisomerase GyrA/ParC subunit family. Heterotetramer, composed of two GyrA and two GyrB chains. In the heterotetramer, GyrA contains the active site tyrosine that forms a transient covalent intermediate with DNA, while GyrB binds cofactors and catalyzes ATP hydrolysis.

Its subcellular location is the cytoplasm. The catalysed reaction is ATP-dependent breakage, passage and rejoining of double-stranded DNA.. Its function is as follows. A type II topoisomerase that negatively supercoils closed circular double-stranded (ds) DNA in an ATP-dependent manner to modulate DNA topology and maintain chromosomes in an underwound state. Negative supercoiling favors strand separation, and DNA replication, transcription, recombination and repair, all of which involve strand separation. Also able to catalyze the interconversion of other topological isomers of dsDNA rings, including catenanes and knotted rings. Type II topoisomerases break and join 2 DNA strands simultaneously in an ATP-dependent manner. The protein is DNA gyrase subunit A of Neisseria gonorrhoeae.